Here is a 370-residue protein sequence, read N- to C-terminus: tRNA (guanine(9)-/adenine(9)-N1)-methyltransferase (370 aa).

One can recognise an SAM-dependent MTase TRM10-type domain in the interval 87-292 (TPEELREKLP…KELPKRATRY (206 aa)).

It belongs to the class IV-like SAM-binding methyltransferase superfamily. TRM10 family.

It localises to the cytoplasm. The catalysed reaction is adenosine(9) in tRNA + S-adenosyl-L-methionine = N(1)-methyladenosine(9) in tRNA + S-adenosyl-L-homocysteine + H(+). It catalyses the reaction guanosine(9) in tRNA + S-adenosyl-L-methionine = N(1)-methylguanosine(9) in tRNA + S-adenosyl-L-homocysteine + H(+). Its function is as follows. Catalyzes the S-adenosyl-L-methionine-dependent formation of either N(1)-methyladenine or N(1)-methylguanine at position 9 (m1A9 or m1G9) in tRNA. The chain is tRNA (guanine(9)-/adenine(9)-N1)-methyltransferase from Thermococcus kodakarensis (strain ATCC BAA-918 / JCM 12380 / KOD1) (Pyrococcus kodakaraensis (strain KOD1)).